We begin with the raw amino-acid sequence, 212 residues long: Urease accessory protein UreG (212 aa).

A GTP-binding site is contributed by 15-22 (GPVGSGKT).

It belongs to the SIMIBI class G3E GTPase family. UreG subfamily. In terms of assembly, homodimer. UreD, UreF and UreG form a complex that acts as a GTP-hydrolysis-dependent molecular chaperone, activating the urease apoprotein by helping to assemble the nickel containing metallocenter of UreC. The UreE protein probably delivers the nickel.

It localises to the cytoplasm. Facilitates the functional incorporation of the urease nickel metallocenter. This process requires GTP hydrolysis, probably effectuated by UreG. This Opitutus terrae (strain DSM 11246 / JCM 15787 / PB90-1) protein is Urease accessory protein UreG.